The following is a 209-amino-acid chain: MKWIIQEEKEEDHLQILNKDSEIGIDEVGRGSVFGPVFSVAVVLSKKSGLTLKKLGVNDSKKLTPKKRKDFFPKIIALSSDYALGQSSVREIDLLGIRHATELSMIRAVKKLKHMPSELLIDGPLTLRLWEGNQRNIISGDSKFISIATASIIAKVMRDSLMERLESKYPGYFIFKNKGYGTKQHFSSLKKHGLTNLHRKSFLNKLNLI.

Residues 20–209 (DSEIGIDEVG…KSFLNKLNLI (190 aa)) enclose the RNase H type-2 domain. A divalent metal cation is bound by residues aspartate 26, glutamate 27, and aspartate 122.

It belongs to the RNase HII family. Requires Mn(2+) as cofactor. The cofactor is Mg(2+).

It is found in the cytoplasm. It carries out the reaction Endonucleolytic cleavage to 5'-phosphomonoester.. Its function is as follows. Endonuclease that specifically degrades the RNA of RNA-DNA hybrids. The sequence is that of Ribonuclease HII from Prochlorococcus marinus subsp. pastoris (strain CCMP1986 / NIES-2087 / MED4).